An 815-amino-acid chain; its full sequence is uncharacterized protein (815 aa).

The first 25 residues, 1-25, serve as a signal peptide directing secretion; that stretch reads MVVMKKKRILIVSAIVLLFLTVASA. 6 helical membrane passes run 127–147, 157–177, 311–331, 333–353, 372–392, and 401–421; these read FGEA…CVRG, ILFI…GYYM, SFIA…LAFF, FLLQ…FILA, VYLL…TCFI, and GFGM…IGFH. Positions 483–815 are disordered; the sequence is KDGSNADGVT…DRLRRDERTR (333 aa). The span at 513–543 shows a compositional bias: polar residues; it reads HAISRTPQKETANGIANHNSRSLKRNPQTLS. Composition is skewed to basic and acidic residues over residues 544–563 and 599–614; these read KEQE…ENKQ and QDKK…KEYV. Positions 619 to 630 are enriched in polar residues; sequence KQPNNQQQTDDA. Basic and acidic residues predominate over residues 648-658; the sequence is ENEKDTERTDQ. The segment covering 665-678 has biased composition (polar residues); sequence EQNQNLETDQQQDF. Positions 696-705 are enriched in basic and acidic residues; it reads KTAEIKRSDQ. Residues 720–732 are compositionally biased toward polar residues; sequence SPQSTKVENQPIA. Residues 734-757 are compositionally biased toward basic and acidic residues; that stretch reads NERKIRPSEPAKVHSDGIRVDEKQ. The span at 773–793 shows a compositional bias: polar residues; it reads PSSQTIKRTEQSVNSFDQVSL. The span at 796 to 815 shows a compositional bias: basic and acidic residues; sequence IARRSSSKVEDRLRRDERTR.

The protein resides in the cell membrane. This is an uncharacterized protein from Bacillus subtilis (strain 168).